We begin with the raw amino-acid sequence, 293 residues long: Formamidopyrimidine-DNA glycosylase (293 aa).

The active-site Schiff-base intermediate with DNA is the P2. The active-site Proton donor is the E3. K58 acts as the Proton donor; for beta-elimination activity in catalysis. Residues H104, R123, and K166 each contribute to the DNA site. Residues 257 to 293 form an FPG-type zinc finger; it reads AAYDREGERCRTDGCGGAVKRFVQNGRSTFWCSGCQK. R283 acts as the Proton donor; for delta-elimination activity in catalysis.

Belongs to the FPG family. In terms of assembly, monomer. Zn(2+) serves as cofactor.

The catalysed reaction is Hydrolysis of DNA containing ring-opened 7-methylguanine residues, releasing 2,6-diamino-4-hydroxy-5-(N-methyl)formamidopyrimidine.. The enzyme catalyses 2'-deoxyribonucleotide-(2'-deoxyribose 5'-phosphate)-2'-deoxyribonucleotide-DNA = a 3'-end 2'-deoxyribonucleotide-(2,3-dehydro-2,3-deoxyribose 5'-phosphate)-DNA + a 5'-end 5'-phospho-2'-deoxyribonucleoside-DNA + H(+). In terms of biological role, involved in base excision repair of DNA damaged by oxidation or by mutagenic agents. Acts as a DNA glycosylase that recognizes and removes damaged bases. Has a preference for oxidized purines, such as 7,8-dihydro-8-oxoguanine (8-oxoG). Has AP (apurinic/apyrimidinic) lyase activity and introduces nicks in the DNA strand. Cleaves the DNA backbone by beta-delta elimination to generate a single-strand break at the site of the removed base with both 3'- and 5'-phosphates. The polypeptide is Formamidopyrimidine-DNA glycosylase (Rhodopseudomonas palustris (strain BisB5)).